A 298-amino-acid polypeptide reads, in one-letter code: Ethanolamine ammonia-lyase small subunit (298 aa).

Residues 15-43 (ASMGQDVPQPVAPSTQEGAKPQRAAPTAT) are disordered. 3 residues coordinate adenosylcob(III)alamin: Val210, Glu231, and Cys261.

The protein belongs to the EutC family. The basic unit is a heterodimer which dimerizes to form tetramers. The heterotetramers trimerize; 6 large subunits form a core ring with 6 small subunits projecting outwards. It depends on adenosylcob(III)alamin as a cofactor.

It localises to the bacterial microcompartment. The enzyme catalyses ethanolamine = acetaldehyde + NH4(+). It participates in amine and polyamine degradation; ethanolamine degradation. Functionally, catalyzes the deamination of various vicinal amino-alcohols to oxo compounds. Allows this organism to utilize ethanolamine as the sole source of nitrogen and carbon in the presence of external vitamin B12. This chain is Ethanolamine ammonia-lyase small subunit, found in Salmonella arizonae (strain ATCC BAA-731 / CDC346-86 / RSK2980).